We begin with the raw amino-acid sequence, 105 residues long: uncharacterized protein (105 aa).

Its subcellular location is the mitochondrion. This is an uncharacterized protein from Paramecium tetraurelia.